Reading from the N-terminus, the 69-residue chain is U2-agatoxin-Ao1g (69 aa).

A signal peptide spans 1–20 (MKAIISLLLISAMVFSMIEA). The propeptide occupies 21–34 (VPVEEGLQLFEGER). Disulfide bonds link Cys36-Cys52, Cys43-Cys57, and Cys51-Cys67. At Leu68 the chain carries Leucine amide.

Belongs to the neurotoxin 01 (U2-agtx) family. As to expression, expressed by the venom gland.

It localises to the secreted. Functionally, insect active toxin causing rapid but reversible paralysis in crickets. No activity shown in mammals. Does not show effect on mammalian voltage-gated calcium channels. The chain is U2-agatoxin-Ao1g from Agelena orientalis (Funnel-web spider).